The following is a 155-amino-acid chain: Ribonuclease 2B (155 aa).

An N-terminal signal peptide occupies residues 1 to 25 (MGLKLLESRLCLLLLLGLVLTLVSC). The Proton acceptor role is filled by His-38. 4 cysteine pairs are disulfide-bonded: Cys-47-Cys-106, Cys-61-Cys-118, Cys-79-Cys-133, and Cys-86-Cys-94. Substrate is bound at residue 62-66 (KDLNT). N-linked (GlcNAc...) asparagine glycosylation is present at Asn-114. The active-site Proton donor is His-150.

It belongs to the pancreatic ribonuclease family.

The enzyme catalyses an [RNA] containing cytidine + H2O = an [RNA]-3'-cytidine-3'-phosphate + a 5'-hydroxy-ribonucleotide-3'-[RNA].. The catalysed reaction is an [RNA] containing uridine + H2O = an [RNA]-3'-uridine-3'-phosphate + a 5'-hydroxy-ribonucleotide-3'-[RNA].. Its function is as follows. This is a non-secretory ribonuclease. It is a pyrimidine specific nuclease with a slight preference for U. Cytotoxin and helminthotoxin. Possesses a wide variety of biological activities. The chain is Ribonuclease 2B from Mus musculus (Mouse).